The primary structure comprises 571 residues: Plastidial pyruvate kinase 3, chloroplastic (571 aa).

The transit peptide at 1–55 directs the protein to the chloroplast; sequence MAAYGQISSGMTVDPQVLSSSRNIGVSLSPLRRTLIGAGVRSTSISLRQCSLSVR. Arg-129 lines the substrate pocket. K(+)-binding residues include Asn-131, Ser-133, Asp-164, and Thr-165. 131–134 contacts ATP; that stretch reads NMSH. Arg-171 is a binding site for ATP. Lys-314 contacts substrate. Mg(2+) is bound at residue Glu-316. Residues Gly-339, Asp-340, and Thr-372 each coordinate substrate. Mg(2+) is bound at residue Asp-340.

It belongs to the pyruvate kinase family. As to quaternary structure, oligomer of alpha and beta subunits. The cofactor is Mg(2+). K(+) is required as a cofactor. As to expression, expressed at low levels in roots, leaves, inflorescences, siliques, pollen, seeds and flowers.

Its subcellular location is the plastid. It localises to the chloroplast stroma. It catalyses the reaction pyruvate + ATP = phosphoenolpyruvate + ADP + H(+). It functions in the pathway carbohydrate degradation; glycolysis; pyruvate from D-glyceraldehyde 3-phosphate: step 5/5. In terms of biological role, required for plastidial pyruvate kinase activity. The chain is Plastidial pyruvate kinase 3, chloroplastic (PKP3) from Arabidopsis thaliana (Mouse-ear cress).